The following is a 423-amino-acid chain: Major royal jelly protein 9 (423 aa).

Residues 1 to 20 form the signal peptide; it reads MSFNIWWLILYFSIVCQAKA. 5 N-linked (GlcNAc...) asparagine glycosylation sites follow: Asn-110, Asn-118, Asn-177, Asn-196, and Asn-345.

Belongs to the major royal jelly protein family. As to expression, expressed at very low levels in the hypopharyngeal glands of adult worker bees (at protein level); expression peaks at 12 days post eclosion. Secreted into bee venom in the sting apparatus (at protein level). Expressed in the brains of adult worker bees peaking at 12 days post eclosion (at protein level). Expressed in the spermatheca of adult queen bees (at protein level); expression levels are higher in mated queens than in virgin queens. Along with Mrjp8 expressed at very low levels in the head of worker bees compared to other major royal jelly proteins.

Its subcellular location is the secreted. In terms of biological role, component of bee sting venom. Component of royal jelly, a substance produced in the hypopharyngeal gland containing proteins, free amino acids, fatty acids, sugars and other nutrients, which is fed to developing larvae by worker nurse bees; may be present only at trace levels. All larvae are fed some royal jelly (also known as worker jelly) early in their development but it forms the principal source of nutrition for larvae destined to become queen bees. Produced in the spermatheca of adult queen bees, along with other major royal jelly proteins, where it may act as a nutrient supply for sperm stored by mated queens, or be involved in energy metabolism. In Apis mellifera (Honeybee), this protein is Major royal jelly protein 9.